The primary structure comprises 82 residues: Small ribosomal subunit protein uS17 (82 aa).

The protein belongs to the universal ribosomal protein uS17 family. As to quaternary structure, part of the 30S ribosomal subunit.

Its function is as follows. One of the primary rRNA binding proteins, it binds specifically to the 5'-end of 16S ribosomal RNA. The protein is Small ribosomal subunit protein uS17 of Rickettsia typhi (strain ATCC VR-144 / Wilmington).